Reading from the N-terminus, the 393-residue chain is MSDHVKITPMTLNFGPQHPAAHGVMRLVLEMGGEVIERIDPHIGLLHRGTEKLIEYKTYLQALPYFDRLDYVSPMAQEHAYSLCVEKLLKCEVPIRAKYLRVIFCELTRILNHLLNISSQALDIGAMTPLLWMFEEREKILNFYERASGARFHSAYIRPGGVAADIPEDLIHDIFQFVNTFPKFMDDVDSLLTENRIWKQRNVDIGVVSKKQALNWGFSGPMLRACGIPWDLRKSQPYEIYDELEFKIPIGEKGDCYDRYLVRMAEIRESISLVEQCLNRIPDGPVKTDDRKIAPPKRSEMKKSMEALIHHFKLYSEGYIVPAGETYMAVEAPKGEFGVYIVSDGTNKPYRCRIRAPGFAHLQAIDMMAKGHMLADLTAIIGSLDIVFGEIDR.

This sequence belongs to the complex I 49 kDa subunit family. As to quaternary structure, NDH-1 is composed of 14 different subunits. Subunits NuoB, C, D, E, F, and G constitute the peripheral sector of the complex.

It is found in the cell inner membrane. The catalysed reaction is a quinone + NADH + 5 H(+)(in) = a quinol + NAD(+) + 4 H(+)(out). NDH-1 shuttles electrons from NADH, via FMN and iron-sulfur (Fe-S) centers, to quinones in the respiratory chain. The immediate electron acceptor for the enzyme in this species is believed to be ubiquinone. Couples the redox reaction to proton translocation (for every two electrons transferred, four hydrogen ions are translocated across the cytoplasmic membrane), and thus conserves the redox energy in a proton gradient. In Ehrlichia ruminantium (strain Gardel), this protein is NADH-quinone oxidoreductase subunit D.